The sequence spans 141 residues: Large ribosomal subunit protein uL11 (141 aa).

It belongs to the universal ribosomal protein uL11 family. Part of the ribosomal stalk of the 50S ribosomal subunit. Interacts with L10 and the large rRNA to form the base of the stalk. L10 forms an elongated spine to which L12 dimers bind in a sequential fashion forming a multimeric L10(L12)X complex. One or more lysine residues are methylated.

In terms of biological role, forms part of the ribosomal stalk which helps the ribosome interact with GTP-bound translation factors. The sequence is that of Large ribosomal subunit protein uL11 from Chlorobium phaeovibrioides (strain DSM 265 / 1930) (Prosthecochloris vibrioformis (strain DSM 265)).